The primary structure comprises 361 residues: Molybdenum import ATP-binding protein ModC (361 aa).

The ABC transporter domain maps to 1-235 (MDGLRLRFRR…VDLPLALDDD (235 aa)). 33-40 (GHSGSGKS) provides a ligand contact to ATP. One can recognise a Mop domain in the interval 296-361 (QSSILNRLPV…AQIKSVAVLA (66 aa)).

The protein belongs to the ABC transporter superfamily. Molybdate importer (TC 3.A.1.8) family. In terms of assembly, the complex is composed of two ATP-binding proteins (ModC), two transmembrane proteins (ModB) and a solute-binding protein (ModA).

Its subcellular location is the cell inner membrane. The enzyme catalyses molybdate(out) + ATP + H2O = molybdate(in) + ADP + phosphate + H(+). Its function is as follows. Part of the ABC transporter complex ModABC involved in molybdenum import. Responsible for energy coupling to the transport system. The polypeptide is Molybdenum import ATP-binding protein ModC (Pseudomonas aeruginosa (strain ATCC 15692 / DSM 22644 / CIP 104116 / JCM 14847 / LMG 12228 / 1C / PRS 101 / PAO1)).